The primary structure comprises 273 residues: MHEAQIRVAIAGAGGRMGRQLIQAAMAMEGVQLGAALEREGSSLLGSDAGELAGAGKSGVIVQSSLEAVKDDFDVFIDFTRPEGTLTHLAFCRQHGKGMVIGTTGFDDAGKQAIREASQEIAIVFAANFSVGVNVMLKLLEKAAKVMGDYSDIEIIEAHHRHKVDAPSGTALAMGEAIAGALDKNLKDCAVYSREGYTGERVAGTIGFATVRAGDIVGEHTAMFADIGERVEITHKASSRMTFANGALRSALWLKTKKNGLFDMRDVLGLDVL.

NAD(+) is bound by residues 12–17 and glutamate 38; that span reads GAGGRM. Arginine 39 is an NADP(+) binding site. Residues 102–104 and 126–129 contribute to the NAD(+) site; these read GTT and AANF. Histidine 159 (proton donor/acceptor) is an active-site residue. Histidine 160 is a (S)-2,3,4,5-tetrahydrodipicolinate binding site. Lysine 163 acts as the Proton donor in catalysis. 169 to 170 is a binding site for (S)-2,3,4,5-tetrahydrodipicolinate; the sequence is GT.

This sequence belongs to the DapB family. As to quaternary structure, homotetramer.

Its subcellular location is the cytoplasm. It carries out the reaction (S)-2,3,4,5-tetrahydrodipicolinate + NAD(+) + H2O = (2S,4S)-4-hydroxy-2,3,4,5-tetrahydrodipicolinate + NADH + H(+). It catalyses the reaction (S)-2,3,4,5-tetrahydrodipicolinate + NADP(+) + H2O = (2S,4S)-4-hydroxy-2,3,4,5-tetrahydrodipicolinate + NADPH + H(+). It functions in the pathway amino-acid biosynthesis; L-lysine biosynthesis via DAP pathway; (S)-tetrahydrodipicolinate from L-aspartate: step 4/4. Its function is as follows. Catalyzes the conversion of 4-hydroxy-tetrahydrodipicolinate (HTPA) to tetrahydrodipicolinate. The chain is 4-hydroxy-tetrahydrodipicolinate reductase from Salmonella typhimurium (strain LT2 / SGSC1412 / ATCC 700720).